A 505-amino-acid polypeptide reads, in one-letter code: MRFSCLALLPGVALLLASALLASASDVLELTDENFESRVSDTGSAGLMLVEFFAPWCGHCKRLAPEYEAAATRLKGIVPLAKVDCTANTNTCNKYGVSGYPTLKIFRDGEEAGAYDGPRTADGIVSHLKKQAGPASVPLRTEDEFKKFISDKDASVVGFFRDLFSDGHSEFLKAASNLRDNYRFAHTNVESLVKEYDDNGEGITIFRPLHLANKFEDKIVAYTEKKMTSGKIKKFIQESIFGLCPHMTEDNKDLIQGKDLLTAYYDVDYEKNTKGSNYWRNRVMMVAKTFLDAGHKLNFAVASRKTFSHELSDFGLESTTGEIPVVAIRTAKGEKFVMQEEFSRDGKALERFLQEYFDGNLKRYLKSEPIPETNEGPVKVVVAESFDDIVNAEDKDVLIEFYAPWCGHCKNLEPKYKELGEKLSKDPNIVIAKMDATANDVPSPYEVKGFPTIYFSPANKKLTPKKYEGGRELNDFISYLQREATNPPIIQEEKPKKKKKAQEDL.

Residues 1-24 form the signal peptide; the sequence is MRFSCLALLPGVALLLASALLASA. Residues 25-133 enclose the Thioredoxin 1 domain; that stretch reads SDVLELTDEN…IVSHLKKQAG (109 aa). Residues C57 and C60 each act as nucleophile in the active site. Residues C57 and C60 are joined by a disulfide bond. The residue at position 61 (K61) is an N6-methyllysine. C85 and C92 are disulfide-bonded. K129 is subject to N6-succinyllysine. K152 carries the N6-acetyllysine modification. At K218 the chain carries N6-succinyllysine. K252 carries the N6-acetyllysine modification. Residue T319 is modified to Phosphothreonine. In terms of domain architecture, Thioredoxin 2 spans 343–485; the sequence is SRDGKALERF…FISYLQREAT (143 aa). K362 is modified (N6-acetyllysine). Catalysis depends on nucleophile residues C406 and C409. C406 and C409 are oxidised to a cystine. The tract at residues 484–505 is disordered; that stretch reads ATNPPIIQEEKPKKKKKAQEDL. A compositionally biased stretch (basic and acidic residues) spans 491–505; the sequence is QEEKPKKKKKAQEDL. Residue K494 is modified to N6-acetyllysine. The Prevents secretion from ER motif lies at 502–505; it reads QEDL.

This sequence belongs to the protein disulfide isomerase family. As to quaternary structure, part of the major histocompatibility complex class I (MHC I) peptide loading complex composed of TAP1, TAP2, B2M, MHC heavy chain, TAPBP, PDIA3, and CALR. Interacts with ERP27 and CANX. Interacts with SERPINA2 and with SERPINA1. Interacts with ATP2A2. Post-translationally, within the major histocompatibility complex class I (MHC I) peptide loading complex forms reversible disulfide-linked heterodimers with TAPBP as part of its protein folding chaperone activity. This is essential to assist the dynamic assembly of the MHC I complex with high affinity antigens in the endoplasmic reticulum. In terms of processing, phosphorylated. In caput epididymal spermatozoa, detected in the head, mid and principal pieces. In cauda epididymal spermatozoa detected only in the acrosome (at protein level).

It localises to the endoplasmic reticulum. The protein localises to the endoplasmic reticulum lumen. The protein resides in the melanosome. The catalysed reaction is Catalyzes the rearrangement of -S-S- bonds in proteins.. Seems to be inhibited by acidic phospholipids. Functionally, protein disulfide isomerase that catalyzes the formation, isomerization, and reduction or oxidation of disulfide bonds in client proteins and functions as a protein folding chaperone. Core component of the major histocompatibility complex class I (MHC I) peptide loading complex where it functions as an essential folding chaperone for TAPBP. Through TAPBP, assists the dynamic assembly of the MHC I complex with high affinity antigens in the endoplasmic reticulum. Therefore, plays a crucial role in the presentation of antigens to cytotoxic T cells in adaptive immunity. The polypeptide is Protein disulfide-isomerase A3 (Pdia3) (Rattus norvegicus (Rat)).